The sequence spans 283 residues: Shikimate kinase (283 aa).

86 to 96 contributes to the ATP binding site; sequence PIKSGLSSSSA.

It belongs to the GHMP kinase family. Archaeal shikimate kinase subfamily.

It localises to the cytoplasm. It catalyses the reaction shikimate + ATP = 3-phosphoshikimate + ADP + H(+). Its pathway is metabolic intermediate biosynthesis; chorismate biosynthesis; chorismate from D-erythrose 4-phosphate and phosphoenolpyruvate: step 5/7. This chain is Shikimate kinase, found in Methanococcus maripaludis (strain C6 / ATCC BAA-1332).